Reading from the N-terminus, the 158-residue chain is Endoribonuclease YbeY (158 aa).

Zn(2+) contacts are provided by His114, His118, and His124.

This sequence belongs to the endoribonuclease YbeY family. The cofactor is Zn(2+).

The protein localises to the cytoplasm. In terms of biological role, single strand-specific metallo-endoribonuclease involved in late-stage 70S ribosome quality control and in maturation of the 3' terminus of the 16S rRNA. In Pasteurella multocida (strain Pm70), this protein is Endoribonuclease YbeY.